A 146-amino-acid chain; its full sequence is 3-dehydroquinate dehydratase (146 aa).

Catalysis depends on Tyr22, which acts as the Proton acceptor. Residues Asn73, His79, and Asp86 each contribute to the substrate site. His99 serves as the catalytic Proton donor. Substrate is bound by residues 100–101 (LS) and Arg110.

Belongs to the type-II 3-dehydroquinase family. In terms of assembly, homododecamer.

The enzyme catalyses 3-dehydroquinate = 3-dehydroshikimate + H2O. It functions in the pathway metabolic intermediate biosynthesis; chorismate biosynthesis; chorismate from D-erythrose 4-phosphate and phosphoenolpyruvate: step 3/7. In terms of biological role, catalyzes a trans-dehydration via an enolate intermediate. This is 3-dehydroquinate dehydratase from Synechococcus sp. (strain CC9902).